The sequence spans 356 residues: Protein MGF 360-3L (356 aa).

Residues 61–93 (KLNTALVLAVKENNEDLIMLFTEWGANINYGLL) form an ANK repeat.

The protein belongs to the asfivirus MGF 360 family.

Plays a role in virus cell tropism, and may be required for efficient virus replication in macrophages. This chain is Protein MGF 360-3L, found in African swine fever virus (strain Badajoz 1971 Vero-adapted) (Ba71V).